Here is a 119-residue protein sequence, read N- to C-terminus: Large ribosomal subunit protein bL20 (119 aa).

The protein belongs to the bacterial ribosomal protein bL20 family.

Binds directly to 23S ribosomal RNA and is necessary for the in vitro assembly process of the 50S ribosomal subunit. It is not involved in the protein synthesizing functions of that subunit. This chain is Large ribosomal subunit protein bL20, found in Anoxybacillus flavithermus (strain DSM 21510 / WK1).